The sequence spans 178 residues: Peptide deformylase (178 aa).

Fe cation is bound by residues Cys-92 and His-134. The active site involves Glu-135. Residue His-138 coordinates Fe cation.

This sequence belongs to the polypeptide deformylase family. Fe(2+) is required as a cofactor.

It catalyses the reaction N-terminal N-formyl-L-methionyl-[peptide] + H2O = N-terminal L-methionyl-[peptide] + formate. Functionally, removes the formyl group from the N-terminal Met of newly synthesized proteins. Requires at least a dipeptide for an efficient rate of reaction. N-terminal L-methionine is a prerequisite for activity but the enzyme has broad specificity at other positions. The chain is Peptide deformylase from Alkalilimnicola ehrlichii (strain ATCC BAA-1101 / DSM 17681 / MLHE-1).